The chain runs to 409 residues: Serine/threonine transporter SstT (409 aa).

9 consecutive transmembrane segments (helical) span residues 14 to 34, 57 to 77, 89 to 109, 149 to 169, 190 to 210, 224 to 244, 296 to 316, 338 to 358, and 365 to 385; these read GNLI…GFIA, GALK…SIII, IIIL…VVSF, AISS…GIAL, IVKF…ATSV, LLLV…AAIV, ISIP…IAVL, IIAA…LMLI, and FGIS…IGVV.

The protein belongs to the dicarboxylate/amino acid:cation symporter (DAACS) (TC 2.A.23) family.

Its subcellular location is the cell inner membrane. The enzyme catalyses L-serine(in) + Na(+)(in) = L-serine(out) + Na(+)(out). The catalysed reaction is L-threonine(in) + Na(+)(in) = L-threonine(out) + Na(+)(out). Its function is as follows. Involved in the import of serine and threonine into the cell, with the concomitant import of sodium (symport system). This chain is Serine/threonine transporter SstT, found in Campylobacter fetus subsp. fetus (strain 82-40).